The chain runs to 137 residues: MPRILAIDYGQKRTGIAITDEMQIIASGLTTIASETSIAFLRDYFTKEKVEKVLIGEPKQMNGEPSQSTDIIEKFVTKFKNNFPDMAIERVDERFTSKMAFQTMIDSGLKKKQRQNKALVDEISATIMLQDYLTRKI.

The protein belongs to the YqgF nuclease family.

It is found in the cytoplasm. Functionally, could be a nuclease involved in processing of the 5'-end of pre-16S rRNA. This chain is Putative pre-16S rRNA nuclease, found in Flavobacterium psychrophilum (strain ATCC 49511 / DSM 21280 / CIP 103535 / JIP02/86).